We begin with the raw amino-acid sequence, 208 residues long: MENTEKLKNSKEVIAYIAECFPNCFTLEGEAKPLKIGIFQDLADRLNDDPKVSKTQLRAALRQYTSSWRYLHGVKPGATRVDLDGNPCGELEEQHVEHAQAALAESKARVEARRKEQVKKVREEAKANKPKAKKPQQARRPQNAPKVEKKPVETRALAASELNVGNQVNVNMGKGNMAATIVEVNKEDVRVQLANGLQMVVKAEHLRA.

Basic and acidic residues predominate over residues 107–127 (KARVEARRKEQVKKVREEAKA). Positions 107–152 (KARVEARRKEQVKKVREEAKANKPKAKKPQQARRPQNAPKVEKKPV) are disordered. Over residues 128 to 137 (NKPKAKKPQQ) the composition is skewed to basic residues.

The protein belongs to the ProQ family.

Its subcellular location is the cytoplasm. In terms of biological role, RNA chaperone with significant RNA binding, RNA strand exchange and RNA duplexing activities. The polypeptide is RNA chaperone ProQ (Vibrio cholerae serotype O1 (strain ATCC 39541 / Classical Ogawa 395 / O395)).